The following is a 352-amino-acid chain: N-acetyl-gamma-glutamyl-phosphate reductase (352 aa).

Cys-155 is a catalytic residue.

The protein belongs to the NAGSA dehydrogenase family. Type 1 subfamily.

The protein resides in the cytoplasm. It carries out the reaction N-acetyl-L-glutamate 5-semialdehyde + phosphate + NADP(+) = N-acetyl-L-glutamyl 5-phosphate + NADPH + H(+). It participates in amino-acid biosynthesis; L-arginine biosynthesis; N(2)-acetyl-L-ornithine from L-glutamate: step 3/4. In terms of biological role, catalyzes the NADPH-dependent reduction of N-acetyl-5-glutamyl phosphate to yield N-acetyl-L-glutamate 5-semialdehyde. The polypeptide is N-acetyl-gamma-glutamyl-phosphate reductase (Cyanothece sp. (strain PCC 7425 / ATCC 29141)).